We begin with the raw amino-acid sequence, 242 residues long: Small ribosomal subunit protein uS2 (242 aa).

This sequence belongs to the universal ribosomal protein uS2 family.

The protein is Small ribosomal subunit protein uS2 of Neisseria gonorrhoeae (strain ATCC 700825 / FA 1090).